Reading from the N-terminus, the 188-residue chain is Grand meiotic recombination cluster protein 2 (188 aa).

Composition is skewed to polar residues over residues 1–13 (MSDT…QSSE) and 21–31 (ERTNSLKSPDV). Residues 1-31 (MSDTTEVPRQSSENDQDNNLERTNSLKSPDV) are disordered.

Probable transcriptional activator involved in meiotic prophase and synaptonemal complex (SC) assembly. The sequence is that of Grand meiotic recombination cluster protein 2 (GMC2) from Saccharomyces cerevisiae (strain ATCC 204508 / S288c) (Baker's yeast).